Here is a 358-residue protein sequence, read N- to C-terminus: COP9 signalosome complex subunit 5b (358 aa).

Met1 is subject to N-acetylmethionine. Residues 59–196 (VKISALALLK…IGAFRTYSKG (138 aa)) enclose the MPN domain. Zn(2+) is bound by residues His142, His144, and Asp155. The JAMM motif motif lies at 142–155 (HSHPGYGCWLSGID). Over residues 338–349 (MRQSNNKSPTDS) the composition is skewed to polar residues. The segment at 338–358 (MRQSNNKSPTDSSDPDPMITY) is disordered.

Belongs to the peptidase M67A family. CSN5 subfamily. Component of the CSN complex, probably composed of CSN1, CSN2, CSN3, CSN4, CSN5 (CSN5A or CSN5B), CSN6 (CSN6A or CSN6B), CSN7 and CSN8. CSN5A or CSN5B are present within distinct CSN complexes each containing only one copy of CSN5. Interacts with itself. In the complex, it is located in the center and probably interacts directly with CSN4 and CSN6A or CSN6B. Also exists as monomeric form. Interacts with CYT1 in vitro and in planta. Interacts with FLZ3. A divalent metal cation serves as cofactor. In terms of tissue distribution, ubiquitously expressed. Highly expressed in flowers and roots. Expressed at lower level in seedlings and siliques.

It localises to the cytoplasm. The protein resides in the nucleus. Its function is as follows. Probable protease subunit of the COP9 signalosome complex (CSN), a complex involved in various cellular and developmental processes such as photomorphogenesis and auxin and jasmonate responses. The CSN complex is an essential regulator of the ubiquitin (Ubl) conjugation pathway by mediating the deneddylation of the cullin subunits of the SCF-type E3 ligase complexes, leading to decrease the Ubl ligase activity of SCF. In the complex, it probably acts as the catalytic center that mediates the cleavage of Nedd8 from cullins. It however has no metalloprotease activity by itself and requires the other subunits of the CSN complex. The CSN complex is involved in repression of photomorphogenesis in darkness by regulating the activity of COP1-containing Ubl ligase complexes. The complex is also required for degradation of PSIAA6 by regulating the activity of the Ubl ligase SCF-TIR complex. Not involved in CSN's deneddylation/derubylation activity. Essential for the structural integrity of the CSN holocomplex. This chain is COP9 signalosome complex subunit 5b, found in Arabidopsis thaliana (Mouse-ear cress).